A 361-amino-acid chain; its full sequence is Phospho-N-acetylmuramoyl-pentapeptide-transferase (361 aa).

The next 10 membrane-spanning stretches (helical) occupy residues 18 to 38 (VFNYLTFRSIVSALTALILVL), 73 to 93 (TMGGVLIIVAIVISVLLWGDL), 97 to 117 (FIWVILLVTVAFSAIGWMDDY), 135 to 155 (LLQSIIGALAAVYLYFSATTG), 168 to 188 (VLPNLGLFYIVLAYFVIVGSS), 196 to 216 (GLDGLALMPTVMIGAALGVFA), 235 to 255 (GAGEVVVFCSALVGAGLGFLW), 263 to 283 (VFMGDVGSLGLGAALGVTAVV), 288 to 308 (LVYFLMGGIFVAETLSVILQV), and 338 to 358 (KVIVRFWIITFILVLCGLATL).

Belongs to the glycosyltransferase 4 family. MraY subfamily. Mg(2+) is required as a cofactor.

The protein localises to the cell inner membrane. It carries out the reaction UDP-N-acetyl-alpha-D-muramoyl-L-alanyl-gamma-D-glutamyl-meso-2,6-diaminopimeloyl-D-alanyl-D-alanine + di-trans,octa-cis-undecaprenyl phosphate = di-trans,octa-cis-undecaprenyl diphospho-N-acetyl-alpha-D-muramoyl-L-alanyl-D-glutamyl-meso-2,6-diaminopimeloyl-D-alanyl-D-alanine + UMP. It functions in the pathway cell wall biogenesis; peptidoglycan biosynthesis. Catalyzes the initial step of the lipid cycle reactions in the biosynthesis of the cell wall peptidoglycan: transfers peptidoglycan precursor phospho-MurNAc-pentapeptide from UDP-MurNAc-pentapeptide onto the lipid carrier undecaprenyl phosphate, yielding undecaprenyl-pyrophosphoryl-MurNAc-pentapeptide, known as lipid I. The polypeptide is Phospho-N-acetylmuramoyl-pentapeptide-transferase (Coxiella burnetii (strain CbuK_Q154) (Coxiella burnetii (strain Q154))).